The chain runs to 185 residues: Elongation factor P 1 (185 aa).

It belongs to the elongation factor P family.

It is found in the cytoplasm. It participates in protein biosynthesis; polypeptide chain elongation. Involved in peptide bond synthesis. Stimulates efficient translation and peptide-bond synthesis on native or reconstituted 70S ribosomes in vitro. Probably functions indirectly by altering the affinity of the ribosome for aminoacyl-tRNA, thus increasing their reactivity as acceptors for peptidyl transferase. In Chlamydia pneumoniae (Chlamydophila pneumoniae), this protein is Elongation factor P 1 (efp1).